The chain runs to 546 residues: Chaperonin GroEL 1 (546 aa).

Residues 30–33 (TLGP), lysine 51, 87–91 (DGTTT), glycine 415, 479–481 (NAA), and aspartate 495 each bind ATP. Residues 526-546 (KEDAPMPGGMPGGMGGMGMDM) form a disordered region. The segment covering 534-546 (GMPGGMGGMGMDM) has biased composition (gly residues).

Belongs to the chaperonin (HSP60) family. In terms of assembly, forms a cylinder of 14 subunits composed of two heptameric rings stacked back-to-back. Interacts with the co-chaperonin GroES.

It is found in the cytoplasm. It carries out the reaction ATP + H2O + a folded polypeptide = ADP + phosphate + an unfolded polypeptide.. In terms of biological role, together with its co-chaperonin GroES, plays an essential role in assisting protein folding. The GroEL-GroES system forms a nano-cage that allows encapsulation of the non-native substrate proteins and provides a physical environment optimized to promote and accelerate protein folding. The sequence is that of Chaperonin GroEL 1 from Burkholderia pseudomallei (strain 1106a).